The primary structure comprises 73 residues: Protein RALF-like 10 (73 aa).

Residues 1 to 17 form the signal peptide; it reads MKALVICLLVIFAAVIA. Intrachain disulfides connect cysteine 35/cysteine 44 and cysteine 64/cysteine 70.

This sequence belongs to the plant rapid alkalinization factor (RALF) family. In terms of tissue distribution, expressed in flowers.

The protein resides in the secreted. In terms of biological role, cell signaling peptide that may regulate plant stress, growth, and development. Mediates a rapid alkalinization of extracellular space by mediating a transient increase in the cytoplasmic Ca(2+) concentration leading to a calcium-dependent signaling events through a cell surface receptor and a concomitant activation of some intracellular mitogen-activated protein kinases. The protein is Protein RALF-like 10 (RALFL10) of Arabidopsis thaliana (Mouse-ear cress).